Here is a 356-residue protein sequence, read N- to C-terminus: Cdc42 effector protein 4 (356 aa).

Position 5 is an N6-methyllysine (lysine 5). Serine 18 carries the phosphoserine modification. In terms of domain architecture, CRIB spans 27–41 (ISAPLGDFRHTMHVG). Positions 51 to 102 (SFLNSKAGEPDGESLDEQPSSSSSKRSLLSRKFRGSKRSQSVTRGEREQRDM) are disordered. Serine 64 is modified (phosphoserine). Residues 78-87 (LLSRKFRGSK) show a composition bias toward basic residues. Residues serine 105, serine 109, and serine 118 each carry the phosphoserine modification. Disordered stretches follow at residues 122–182 (LNEK…LDEQ) and 257–356 (VAAP…EIRV). The span at 123–132 (NEKEAAEKGT) shows a compositional bias: basic and acidic residues. Residues 133–143 (SKLPKSLSSSP) are compositionally biased toward low complexity. 6 positions are modified to phosphoserine: serine 138, serine 140, serine 142, serine 174, serine 292, and serine 295. Over residues 287 to 315 (AAAAPSPGSARSMGSHTTRDSSSLSSCTS) the composition is skewed to low complexity. Over residues 318 to 344 (LEERSPAFRGPDRARAAVSRQPDKEFS) the composition is skewed to basic and acidic residues. Acidic residues predominate over residues 345–356 (FMDEEEEDEIRV).

Belongs to the BORG/CEP family. As to quaternary structure, interacts with CDC42 and RHOQ, in a GTP-dependent manner. Not detected in any of the adult tissues tested. May be expressed only in fetal or embryonic tissues.

It localises to the endomembrane system. It is found in the cytoplasm. Its subcellular location is the cytoskeleton. In terms of biological role, probably involved in the organization of the actin cytoskeleton. May act downstream of CDC42 to induce actin filament assembly leading to cell shape changes. Induces pseudopodia formation, when overexpressed in fibroblasts. The protein is Cdc42 effector protein 4 (CDC42EP4) of Homo sapiens (Human).